The sequence spans 229 residues: Urease accessory protein UreF (229 aa).

The protein belongs to the UreF family. UreD, UreF and UreG form a complex that acts as a GTP-hydrolysis-dependent molecular chaperone, activating the urease apoprotein by helping to assemble the nickel containing metallocenter of UreC. The UreE protein probably delivers the nickel.

The protein localises to the cytoplasm. Required for maturation of urease via the functional incorporation of the urease nickel metallocenter. The protein is Urease accessory protein UreF of Staphylococcus aureus (strain bovine RF122 / ET3-1).